The sequence spans 947 residues: Protocadherin alpha-4 (947 aa).

Positions 1–29 (MEFSWGSGQESRRLLLLLLLLSAWEAGNG) are cleaved as a signal peptide. Cadherin domains lie at 30 to 133 (QLHY…PPVF), 134 to 242 (PATQ…APAF), 243 to 350 (DRTI…VPDL), 351 to 455 (EFKS…APAF), 456 to 565 (AQPE…APAL), and 588 to 678 (DHVV…APKA). Over 30-697 (QLHYSVSEEA…GPDAALVDVN (668 aa)) the chain is Extracellular. A disulfide bond links Cys-96 and Cys-102. 3 N-linked (GlcNAc...) asparagine glycosylation sites follow: Asn-139, Asn-257, and Asn-265. Asn-548 is a glycosylation site (N-linked (GlcNAc...) asparagine). The helical transmembrane segment at 698–718 (VYLIIAICAVSSLLVLTLLLY) threads the bilayer. At 719-947 (TALRCSAPPT…GNSTTDNSDQ (229 aa)) the chain is on the cytoplasmic side. PXXP repeat units lie at residues 734 to 737 (PGKP), 774 to 777 (PSLP), 796 to 799 (PRQP), 829 to 832 (PGGP), 870 to 873 (PGNP), and 888 to 891 (PGSP). Positions 734–891 (PGKPTLVCSS…PDKFIIPGSP (158 aa)) are 6 X 4 AA repeats of P-X-X-P. A required for interaction with FYN region spans residues 738 to 947 (TLVCSSAVGS…GNSTTDNSDQ (210 aa)). 2 disordered regions span residues 754-805 (RRPR…DWRY) and 828-853 (GPGG…EVSP). The disordered stretch occupies residues 892-947 (AIISIRQEPANSQIDKSDFITFGKKEETKKKKKKKKGNKTQEKKEKGNSTTDNSDQ). Basic and acidic residues predominate over residues 906–920 (DKSDFITFGKKEETK).

In terms of assembly, forms homodimers in trans (molecules expressed by two different cells). Forms promiscuous heterodimers in cis (at the plasma membrane of the same cell) with other protocadherins. Interacts with FYN.

The protein localises to the cell membrane. Functionally, calcium-dependent cell-adhesion protein involved in cells self-recognition and non-self discrimination. Thereby, it is involved in the establishment and maintenance of specific neuronal connections in the brain. In Pan troglodytes (Chimpanzee), this protein is Protocadherin alpha-4.